The sequence spans 291 residues: MSRQRPVIGVFDSGFGGLTVLREIVRLVPNAEYLYFGDTARLPYGTKSADTVARYALGACHFLEGQGAEHLVIACNTATALAMDAIEAKANVPAIGVVEPGASAAAAISKTRSVAVIGTEATISSHAYHHALERLGINAYEKATPLLVPLVEEGWTDHPVTKQVAEIYLQDAFVRREQRSDVLVLGCTHYPLIRPLLRKVVPSDVAIVDSAESTAKALAKKLGIAPPSASAAGATQAAGARAQMAPSAPEPKEGTPDFRFFVTDSVQKFRRLGSGFLGHPVDNVEHVDLGG.

Substrate-binding positions include 12-13 (DS) and 44-45 (YG). Cysteine 75 acts as the Proton donor/acceptor in catalysis. 76 to 77 (NT) is a substrate binding site. Cysteine 187 (proton donor/acceptor) is an active-site residue. Substrate is bound at residue 188-189 (TH). Residues 234-247 (ATQAAGARAQMAPS) show a composition bias toward low complexity. A disordered region spans residues 234-257 (ATQAAGARAQMAPSAPEPKEGTPD).

It belongs to the aspartate/glutamate racemases family.

It catalyses the reaction L-glutamate = D-glutamate. It participates in cell wall biogenesis; peptidoglycan biosynthesis. Its function is as follows. Provides the (R)-glutamate required for cell wall biosynthesis. In Koribacter versatilis (strain Ellin345), this protein is Glutamate racemase.